The chain runs to 377 residues: Mitogen-activated protein kinase pmk-1 (377 aa).

The region spanning 35–319 is the Protein kinase domain; sequence YINLTPIGTG…AKEAMEHEYL (285 aa). Residues 41–49 and K64 each bind ATP; that span reads IGTGAYGTV. The active-site Proton acceptor is D179. At T191 the chain carries Phosphothreonine. A TXY motif is present at residues 191 to 193; sequence TGY. Y193 carries the post-translational modification Phosphotyrosine.

Belongs to the protein kinase superfamily. CMGC Ser/Thr protein kinase family. MAP kinase subfamily. Interacts with transcription factor atf-7; perhaps in a manner dependent on dual specificity protein kinase sek-1. It depends on Mg(2+) as a cofactor. Mn(2+) is required as a cofactor. In terms of processing, dually phosphorylated on Thr-191 and Tyr-193, probably by sek-1, which activates the enzyme. Increased phosphorylation in response to the heavy metal arsenite. Increased phosphorylation in response to intestinal colonization by probiotic Lactobacillus fermentum strain JDFM216. Expressed in intestinal cells.

It localises to the nucleus. It catalyses the reaction L-seryl-[protein] + ATP = O-phospho-L-seryl-[protein] + ADP + H(+). The enzyme catalyses L-threonyl-[protein] + ATP = O-phospho-L-threonyl-[protein] + ADP + H(+). Its activity is regulated as follows. Activated by phosphorylation on threonine and tyrosine. Inhibited by pyridinyl-imidazole related compounds. Functionally, serine/threonine kinase which responds to activation by environmental stress and pro-inflammatory cytokines by phosphorylating downstream targets. As part of a MAP kinase signaling pathway, plays a role in modulation of lifespan and immunity. Phosphorylates skn-1 which probably regulates skn-1 nuclear translocation in response to oxidative stress. Probably by activating skn-1, involved in the up-regulation of gcs-1 and glutathione-S-transferase gst-4 expression upon bacteria infection. Up-regulates expression of gcs-1 in intestinal cells upon arsenite treatment. Functions downstream of the MAPKK sek-1 and the MAPKKK nsy-1 as the MAP kinase which regulates pathogen resistance and responses to oxidative stress. Required for expression of antimicrobial peptide nlp-29 in response to fungal infection or physical injury. Involved in resistance to the nematotoxic C.cinerea galectin (Cgl2). May play a redundant role with other MAP kinases in susceptibility to anoxia, downstream of tir-1/nsy-1. Phosphorylates transcription factor rnt-1 during oxidative stress which results in rnt-1 stabilization in the intestine. Phosphorylates transcription factor atf-7 during pathogen infection resulting in modulation of target genes. Probably downstream of nsy-1 and sek-1, involved in germline apoptosis induced by heavy metals, such as Cu(2+). Regulates the basal expression of immune effector genes including irg-4, irg-5, mul-1 and drd-50. This is Mitogen-activated protein kinase pmk-1 from Caenorhabditis elegans.